A 594-amino-acid chain; its full sequence is Spermidine/putrescine import ATP-binding protein PotA (594 aa).

The ABC transporter domain maps to 24 to 435 (IEIKKINKTY…PANNWVANFI (412 aa)). ATP is bound at residue 57-64 (GPSGCGKT). Residues 125–304 (RKPIENVSAD…EWFDKKKLTR (180 aa)) form an insert region.

This sequence belongs to the ABC transporter superfamily. Spermidine/putrescine importer (TC 3.A.1.11.1) family. As to quaternary structure, the complex is composed of two ATP-binding proteins (PotA), two transmembrane proteins (PotB and PotC) and a solute-binding protein (PotD).

The protein resides in the cell membrane. The enzyme catalyses ATP + H2O + polyamine-[polyamine-binding protein]Side 1 = ADP + phosphate + polyamineSide 2 + [polyamine-binding protein]Side 1.. In terms of biological role, part of the ABC transporter complex PotABCD involved in spermidine/putrescine import. Responsible for energy coupling to the transport system. In Malacoplasma penetrans (strain HF-2) (Mycoplasma penetrans), this protein is Spermidine/putrescine import ATP-binding protein PotA.